A 214-amino-acid polypeptide reads, in one-letter code: Redox-sensing transcriptional repressor Rex (214 aa).

A DNA-binding region (H-T-H motif) is located at residues 16–55; the sequence is IYFRYLNVLKDANKQRVSSTELSEAVQVDSATIRRDFSYF. 90 to 95 lines the NAD(+) pocket; that stretch reads GVGSLG.

It belongs to the transcriptional regulatory Rex family. As to quaternary structure, homodimer.

The protein resides in the cytoplasm. Functionally, modulates transcription in response to changes in cellular NADH/NAD(+) redox state. This is Redox-sensing transcriptional repressor Rex from Limosilactobacillus reuteri (strain DSM 20016) (Lactobacillus reuteri).